Consider the following 156-residue polypeptide: SPbeta prophage-derived uncharacterized protein YosH (156 aa).

The sequence is that of SPbeta prophage-derived uncharacterized protein YosH (yosH) from Bacillus subtilis (strain 168).